The sequence spans 131 residues: Fumarate reductase subunit C (131 aa).

A run of 3 helical transmembrane segments spans residues 30–50 (EGTA…LFAL), 61–81 (IGFL…AAAL), and 110–130 (IKGL…VALF).

This sequence belongs to the FrdC family. Part of an enzyme complex containing four subunits: a flavoprotein (FrdA), an iron-sulfur protein (FrdB), and two hydrophobic anchor proteins (FrdC and FrdD).

It is found in the cell inner membrane. Two distinct, membrane-bound, FAD-containing enzymes are responsible for the catalysis of fumarate and succinate interconversion; fumarate reductase is used in anaerobic growth, and succinate dehydrogenase is used in aerobic growth. Anchors the catalytic components of the fumarate reductase complex to the cell inner membrane, binds quinones. The chain is Fumarate reductase subunit C from Klebsiella pneumoniae subsp. pneumoniae (strain ATCC 700721 / MGH 78578).